We begin with the raw amino-acid sequence, 326 residues long: MTRFGLALLMILVIQGLVTFSEAQLKMGFYDQTCPYAEKIVQDVVNQHINNAPSLAAGLIRMHFHDCFVRGCDGSILINATSSNQQVEKLAPPNLTVRGFDFIDKVKSALESKCPGIVSCADIITLATRDSIVAIGGPTWNVPTGRRDGRISNFAEAMNNIPPPFGNFTTLITLFGNQGLDVKDLVLLSGAHTIGVSHCSSFSNRLFNFTGVGDQDPSLDSEYADNLKSRRCLSIADNTTKVEMDPGSRNTFDLSYYRLVLKRRGLFESDAALTMNPAALAQVKRFAGGSEQEFFAEFSNSMEKMGRIGVKTGSDGEIRRTCAFVN.

Positions 1 to 23 are cleaved as a signal peptide; it reads MTRFGLALLMILVIQGLVTFSEA. 4 disulfide bridges follow: Cys-34-Cys-114, Cys-67-Cys-72, Cys-120-Cys-322, and Cys-199-Cys-232. The active-site Proton acceptor is the His-65. The Ca(2+) site is built by Asp-66, Val-69, Gly-71, Asp-73, and Ser-75. Asn-79 is a glycosylation site (N-linked (GlcNAc...) asparagine). Pro-162 provides a ligand contact to substrate. Asn-167 is a glycosylation site (N-linked (GlcNAc...) asparagine). His-192 is a heme b binding site. Thr-193 contributes to the Ca(2+) binding site. N-linked (GlcNAc...) asparagine glycosylation is found at Asn-208 and Asn-238. Residues Asp-245, Ser-248, and Asp-253 each coordinate Ca(2+).

The protein belongs to the peroxidase family. Classical plant (class III) peroxidase subfamily. It depends on heme b as a cofactor. The cofactor is Ca(2+). In terms of tissue distribution, slightly expressed in roots.

It is found in the secreted. It carries out the reaction 2 a phenolic donor + H2O2 = 2 a phenolic radical donor + 2 H2O. In terms of biological role, removal of H(2)O(2), oxidation of toxic reductants, biosynthesis and degradation of lignin, suberization, auxin catabolism, response to environmental stresses such as wounding, pathogen attack and oxidative stress. These functions might be dependent on each isozyme/isoform in each plant tissue. The chain is Peroxidase 39 (PER39) from Arabidopsis thaliana (Mouse-ear cress).